The primary structure comprises 483 residues: Glutamyl-tRNA(Gln) amidotransferase subunit A (483 aa).

Residues K76 and S151 each act as charge relay system in the active site. Catalysis depends on S175, which acts as the Acyl-ester intermediate.

The protein belongs to the amidase family. GatA subfamily. As to quaternary structure, heterotrimer of A, B and C subunits.

The catalysed reaction is L-glutamyl-tRNA(Gln) + L-glutamine + ATP + H2O = L-glutaminyl-tRNA(Gln) + L-glutamate + ADP + phosphate + H(+). Allows the formation of correctly charged Gln-tRNA(Gln) through the transamidation of misacylated Glu-tRNA(Gln) in organisms which lack glutaminyl-tRNA synthetase. The reaction takes place in the presence of glutamine and ATP through an activated gamma-phospho-Glu-tRNA(Gln). The sequence is that of Glutamyl-tRNA(Gln) amidotransferase subunit A from Azotobacter vinelandii (strain DJ / ATCC BAA-1303).